The primary structure comprises 93 residues: Large ribosomal subunit protein uL23 (93 aa).

Belongs to the universal ribosomal protein uL23 family. In terms of assembly, part of the 50S ribosomal subunit. Contacts protein L29, and trigger factor when it is bound to the ribosome.

Its function is as follows. One of the early assembly proteins it binds 23S rRNA. One of the proteins that surrounds the polypeptide exit tunnel on the outside of the ribosome. Forms the main docking site for trigger factor binding to the ribosome. The sequence is that of Large ribosomal subunit protein uL23 from Campylobacter hominis (strain ATCC BAA-381 / DSM 21671 / CCUG 45161 / LMG 19568 / NCTC 13146 / CH001A).